A 541-amino-acid chain; its full sequence is Chaperonin GroEL 1 (541 aa).

Residues 29 to 32 (TLGP), 86 to 90 (DGTTT), glycine 413, 477 to 479 (NAA), and aspartate 493 each bind ATP.

Belongs to the chaperonin (HSP60) family. As to quaternary structure, forms a cylinder of 14 subunits composed of two heptameric rings stacked back-to-back. Interacts with the co-chaperonin GroES.

It is found in the cytoplasm. It carries out the reaction ATP + H2O + a folded polypeptide = ADP + phosphate + an unfolded polypeptide.. Its function is as follows. Together with its co-chaperonin GroES, plays an essential role in assisting protein folding. The GroEL-GroES system forms a nano-cage that allows encapsulation of the non-native substrate proteins and provides a physical environment optimized to promote and accelerate protein folding. The sequence is that of Chaperonin GroEL 1 from Nocardioides sp. (strain ATCC BAA-499 / JS614).